The primary structure comprises 1018 residues: UPF0182 protein Tfu_0541 (1018 aa).

7 helical membrane passes run 20-40 (LAPV…AANF), 64-84 (ALLF…SVYF), 115-135 (VFFW…ATAE), 171-191 (VIIG…VVVH), 212-232 (VHLS…YWLE), 254-274 (AVLY…VLFF), and 287-307 (VSLG…PAIV). 2 disordered regions span residues 497–570 (YPVD…QANN) and 939–965 (GDEA…ASSD). 2 stretches are compositionally biased toward acidic residues: residues 542–560 (QDQE…EEEQ) and 939–959 (GDEA…EEEQ).

Belongs to the UPF0182 family.

The protein resides in the cell membrane. This Thermobifida fusca (strain YX) protein is UPF0182 protein Tfu_0541.